We begin with the raw amino-acid sequence, 107 residues long: Integration host factor (107 aa).

A disordered region spans residues 1–20 (MALPPLTPEQRAAALEKAAA). Residues 9-18 (EQRAAALEKA) are compositionally biased toward low complexity. Lys-54 is a DNA binding site. The H2TH motif, binds DNA motif lies at 64-71 (LPGVGKVR). DNA-binding residues include Ser-82, Arg-85, Arg-88, Ser-92, Asn-93, and Gln-94. A lid, binds DNA region spans residues 82-94 (SESRRVRGLGSNQ).

Belongs to the actinobacterial IHF (aIHF) family. As to quaternary structure, monomer.

Its subcellular location is the cytoplasm. It localises to the spore. The protein localises to the nucleoid. In terms of biological role, a nucleoid-associated protein (NAP) that probably plays a role in chromosome compactation. Contributes to development and secondary metabolism, but is dispensable for growth and viability. Binds to the promoter region of a number of genes (including itself); multiple molecules of the protein bind to the DNA simultaneously, deletion alters the expression of about 30 genes (both up- and down-regulation occurs). Plays a role in controlling viability. Binds dsDNA without any obvious sequence specificity, in a concentration and length-dependent manner. Promotes supercoiling in a topoisomerase-dependent manner (counteracts TopA plasmid relaxation). Binds DNA as a monomer, contacting 8 base pairs via the phosphate backbone; each monomer can bind 2 DNA duplexes, allowing a bridging function. Alters DNA topology, constraining negative supercoils, possibly by DNA twist. Longer dsDNA binds more than one sIHF subunit. This Streptomyces coelicolor (strain ATCC BAA-471 / A3(2) / M145) protein is Integration host factor.